A 394-amino-acid chain; its full sequence is Homoserine O-succinyltransferase (394 aa).

The AB hydrolase-1 domain occupies 54–368 (NAVLICHALS…SSPAGHDAFL (315 aa)). Ser-160 (nucleophile) is an active-site residue. Substrate is bound at residue Arg-236. Residues Asp-331 and His-364 contribute to the active site. Asp-365 is a substrate binding site.

Belongs to the AB hydrolase superfamily. MetX family. In terms of assembly, homodimer.

The protein localises to the cytoplasm. The enzyme catalyses L-homoserine + succinyl-CoA = O-succinyl-L-homoserine + CoA. The protein operates within amino-acid biosynthesis; L-methionine biosynthesis via de novo pathway; O-succinyl-L-homoserine from L-homoserine: step 1/1. Functionally, transfers a succinyl group from succinyl-CoA to L-homoserine, forming succinyl-L-homoserine. The sequence is that of Homoserine O-succinyltransferase from Magnetococcus marinus (strain ATCC BAA-1437 / JCM 17883 / MC-1).